The chain runs to 324 residues: Elongation factor P--(R)-beta-lysine ligase (324 aa).

75 to 77 is a substrate binding site; that stretch reads SPE. ATP-binding positions include 99 to 101 and asparagine 108; that span reads RNQ. Tyrosine 117 provides a ligand contact to substrate. Residue 243–244 participates in ATP binding; that stretch reads EL. Glutamate 250 is a substrate binding site. Glycine 299 provides a ligand contact to ATP.

Belongs to the class-II aminoacyl-tRNA synthetase family. EpmA subfamily. As to quaternary structure, homodimer.

The catalysed reaction is D-beta-lysine + L-lysyl-[protein] + ATP = N(6)-((3R)-3,6-diaminohexanoyl)-L-lysyl-[protein] + AMP + diphosphate + H(+). Functionally, with EpmB is involved in the beta-lysylation step of the post-translational modification of translation elongation factor P (EF-P). Catalyzes the ATP-dependent activation of (R)-beta-lysine produced by EpmB, forming a lysyl-adenylate, from which the beta-lysyl moiety is then transferred to the epsilon-amino group of a conserved specific lysine residue in EF-P. This is Elongation factor P--(R)-beta-lysine ligase from Buchnera aphidicola subsp. Schizaphis graminum (strain Sg).